The chain runs to 729 residues: Sodium-dependent neutral amino acid transporter B(0)AT2 (729 aa).

The Cytoplasmic portion of the chain corresponds to 1-69 (MPKNSKVVKR…ERPAWNSKLQ (69 aa)). 2 positions are modified to phosphoserine: Ser25 and Ser55. Positions 42–61 (DVQEEKDTDAEDGSEADDER) are disordered. A compositionally biased stretch (acidic residues) spans 43–59 (VQEEKDTDAEDGSEADD). A run of 3 helical transmembrane segments spans residues 70–90 (YILAQVGFSVGLGNVWRFPYL), 98–117 (AYLLPYLILLLVIGIPLFFL), and 142–162 (GIGFASCVVCYFVALYYNVII). Topologically, residues 163–225 (GWTLFYFSQS…SSISDSGGLN (63 aa)) are extracellular. The N-linked (GlcNAc...) asparagine glycan is linked to Asn187. 2 helical membrane passes run 226–244 (WKMTVCLLVAWVMVCLAMI) and 253–270 (IMYFSSLFPYVVLICFLI). The N-linked (GlcNAc...) asparagine glycan is linked to Asn276. 2 helical membrane passes run 306–323 (VFFALGLGFGGVIAFSSY) and 335–356 (VLVSFINFFTSVLATLVVFAVL). The Extracellular segment spans residues 357–452 (GFKANIVNEK…FIAFTEAMTH (96 aa)). Residues Asn383 and Asn394 are each glycosylated (N-linked (GlcNAc...) asparagine). The next 5 membrane-spanning stretches (helical) occupy residues 453-472 (FPASPFWSVMFFLMLINLGL), 496-514 (ILTVICCLLAFCIGLIFVQ), 530-550 (TLPLLIVVILENIAVSFVYGI), 571-592 (YMWKYISPLMLLTLLIASIVNM), and 620-642 (VVCFSLMVLAILPVPVVFIIRRC). Residues 643 to 729 (NLIDDSSGNL…DMPDMPESDL (87 aa)) are Cytoplasmic-facing. Phosphoserine is present on residues Ser687, Ser699, and Ser701.

Belongs to the sodium:neurotransmitter symporter (SNF) (TC 2.A.22) family. SLC6A15 subfamily. Significant expressed in brain, lung and kidney. In brain, mainly expressed int the cortex, the cerebellum and the brain stem.

It localises to the membrane. It carries out the reaction L-pipecolate(in) + Na(+)(in) = L-pipecolate(out) + Na(+)(out). The catalysed reaction is L-leucine(in) + Na(+)(in) = L-leucine(out) + Na(+)(out). The enzyme catalyses L-isoleucine(in) + Na(+)(in) = L-isoleucine(out) + Na(+)(out). It catalyses the reaction L-methionine(in) + Na(+)(in) = L-methionine(out) + Na(+)(out). It carries out the reaction L-proline(in) + Na(+)(in) = L-proline(out) + Na(+)(out). The catalysed reaction is L-alanine(in) + Na(+)(in) = L-alanine(out) + Na(+)(out). The enzyme catalyses L-asparagine(in) + Na(+)(in) = L-asparagine(out) + Na(+)(out). It catalyses the reaction L-valine(in) + Na(+)(in) = L-valine(out) + Na(+)(out). It carries out the reaction L-cysteine(in) + Na(+)(in) = L-cysteine(out) + Na(+)(out). The catalysed reaction is L-glutamine(in) + Na(+)(in) = L-glutamine(out) + Na(+)(out). The enzyme catalyses L-serine(in) + Na(+)(in) = L-serine(out) + Na(+)(out). It catalyses the reaction L-threonine(in) + Na(+)(in) = L-threonine(out) + Na(+)(out). It carries out the reaction L-phenylalanine(in) + Na(+)(in) = L-phenylalanine(out) + Na(+)(out). Its function is as follows. Functions as a sodium-dependent neutral amino acid transporter. Exhibits preference for methionine and for the branched-chain amino acids, particularly leucine, valine and isoleucine. Can also transport low-affinity substrates such as alanine, phenylalanine, glutamine and pipecolic acid. Mediates the saturable, pH-sensitive and electrogenic cotransport of proline and sodium ions with a stoichiometry of 1:1. May have a role as transporter for neurotransmitter precursors into neurons. In contrast to other members of the neurotransmitter transporter family, does not appear to be chloride-dependent. The polypeptide is Sodium-dependent neutral amino acid transporter B(0)AT2 (Slc6a15) (Mus musculus (Mouse)).